An 887-amino-acid chain; its full sequence is MEKKLLIIVIVFLFSTIQVFCRIDDKTFVISNETYLSYHFPVDSEYFSSLNFEHYEGPSFQLDFECITFNGTICFSQIYPEIKKKIYGTSISYSTQKTYKLDQELFPTPIVSSPFQPPTKGGISILKGTFLTFSEKTFYQVIYPKKQKIFILDSESLSFDATNFKVNCPPGCGYQIIKWDNGNLFNFSYSNPSISVVKINPSNIIVNGSDFCDSSYSSNITIDGVIIPNSNYEKDEDSIVIIYTQQHTIKSLMKIETSNVTSVEIEIVFKPEPLLINSVPYSKGGLLILEGLRLSSNTTNKNNNNNNIIIKIGNITCSNAISISNDSITCNLNPGFNNKSVTLNNLPVSVTINNITNENKLLFNYGIVKLNPNKYSLPDRVLQLNGDCLGNSNGTIVYLNGKETLLNDLKINNQETTLSFKIPDEFKSKLNVSIKVNDILSNEIQIDISFYASHSNEQPSTNGNTNIIFTLYNIKSENYNKIPSIIIIPEQIVINGVSVNSPTNQDVHSYSFLIPAGCGKKDIQIIIGSQSCLSSITYFEPIIKNCLVSGFDGTNGNIICDGSFGNKDYLIKSSVLFSNDEIIPPSINSTTFSFPLISGYHSDDLIFQMCGVQSKPFKLNISPSLKGINQSQMETLGGKFYILGEFFSANINCSVFCNDKEYEKKFENSKTISFDLQIPGPNDITCNYTFDNGKNTGDFKIEYPLPLIENTSSINVNGGNLTIYGKNFYNVSNIKVEVDNQLKCNKIEFINLNSLTCFLPPFIETLFNDQKLLLNSSTTIFSKKLLLNVTFESKTWSGYIFQYSKEEIKNNDTSENSTNDILNHEKNNNNQKDGSSLSKKSIILLSILLPSFIILIVSLAIVILVIKRNKTKHSKNMSSKEKELMKQ.

An N-terminal signal peptide occupies residues 1–21 (MEKKLLIIVIVFLFSTIQVFC). The Extracellular portion of the chain corresponds to 22 to 845 (RIDDKTFVIS…SLSKKSIILL (824 aa)). Asn-32, Asn-70, Asn-186, Asn-207, Asn-219, Asn-259, Asn-297, Asn-314, Asn-325, Asn-338, Asn-354, Asn-393, Asn-431, Asn-588, Asn-629, Asn-652, Asn-687, Asn-710, Asn-720, Asn-730, Asn-775, Asn-788, Asn-811, and Asn-816 each carry an N-linked (GlcNAc...) asparagine glycan. One can recognise an IPT/TIG 1 domain in the interval 277 to 365 (NSVPYSKGGL…TNENKLLFNY (89 aa)). The IPT/TIG 2 domain occupies 710 to 767 (NTSSINVNGGNLTIYGKNFYNVSNIKVEVDNQLKCNKIEFINLNSLTCFLPPFIETLF). A disordered region spans residues 811–835 (NDTSENSTNDILNHEKNNNNQKDGS). Residues 846-866 (SILLPSFIILIVSLAIVILVI) traverse the membrane as a helical segment. At 867–887 (KRNKTKHSKNMSSKEKELMKQ) the chain is on the cytoplasmic side.

Its subcellular location is the membrane. The protein is Tiger protein O1 (tgrO1) of Dictyostelium discoideum (Social amoeba).